The sequence spans 249 residues: Phosphate import ATP-binding protein PstB (249 aa).

The 241-residue stretch at 4-244 (VKIKDLSLFY…PQDKRTEDYI (241 aa)) folds into the ABC transporter domain. Residue 36–43 (GPSGCGKS) coordinates ATP.

It belongs to the ABC transporter superfamily. Phosphate importer (TC 3.A.1.7) family. As to quaternary structure, the complex is composed of two ATP-binding proteins (PstB), two transmembrane proteins (PstC and PstA) and a solute-binding protein (PstS).

The protein localises to the cell membrane. It carries out the reaction phosphate(out) + ATP + H2O = ADP + 2 phosphate(in) + H(+). In terms of biological role, part of the ABC transporter complex PstSACB involved in phosphate import. Responsible for energy coupling to the transport system. This is Phosphate import ATP-binding protein PstB from Clostridium tetani (strain Massachusetts / E88).